The following is a 475-amino-acid chain: Putative F-box protein At1g46840 (475 aa).

Residues 25–71 (TYVLEKLHIDLVIEILSRLSAKSIAICRCVSKQWNSLLVSQDFVESF) enclose the F-box domain. The segment covering 423 to 433 (SSYSTTRSYKS) has biased composition (low complexity). Positions 423–475 (SSYSTTRSYKSSGKRCSDRSIGEDEQDDIGEKRGDQAAERRERSTKRGKHEVH) are disordered. The segment covering 451-464 (IGEKRGDQAAERRE) has biased composition (basic and acidic residues). Over residues 465 to 475 (RSTKRGKHEVH) the composition is skewed to basic residues.

The sequence is that of Putative F-box protein At1g46840 from Arabidopsis thaliana (Mouse-ear cress).